The chain runs to 1033 residues: NACHT, LRR and PYD domains-containing protein 3 (1033 aa).

Positions Met1–Glu91 constitute a Pyrin domain. Ser3 bears the Phosphoserine mark. The cysteines at positions 6 and 104 are disulfide-linked. A Phosphotyrosine modification is found at Tyr11. Cys126 carries the S-palmitoyl cysteine lipid modification. The interval Lys127–Lys130 is required for binding to phosphatidylinositol 4-phosphate (PtdIns4P). A phosphotyrosine; by BTK mark is found at Tyr132, Tyr136, and Tyr145. An FISNA domain is found at Tyr136–Glu206. Ser157 is modified (phosphoserine). A Phosphotyrosine; by BTK modification is found at Tyr164. Thr165 is a binding site for ATP. Ser194 carries the phosphoserine; by MAPK8 modification. Ser197 carries the phosphoserine modification. The 317-residue stretch at His216–Leu532 folds into the NACHT domain. Residue Gly222–Ile230 coordinates ATP. Residue Ser261 is modified to Phosphoserine. Ser291 is modified (phosphoserine; by PKD/PRKD1). A Glycyl lysine isopeptide (Lys-Gly) (interchain with G-Cter in ubiquitin) cross-link involves residue Lys320. A Phosphoserine modification is found at Ser330. Positions Leu351–Gln355 match the KFERQ-like motif 1 motif. Lys426 participates in a covalent cross-link: Glycyl lysine isopeptide (Lys-Gly) (interchain with G-Cter in ubiquitin). His518 is a binding site for ATP. The KFERQ-like motif 2 motif lies at Gln601–Glu605. A Glycyl lysine isopeptide (Lys-Gly) (interchain with G-Cter in ubiquitin) cross-link involves residue Lys687. Phosphoserine is present on residues Ser725 and Ser732. LRR repeat units follow at residues Ser739 to Cys759, Asn768 to Ser789, Lys796 to Cys816, Asn825 to Leu846, and Ser853 to Cys873. A KFERQ-like motif 3 motif is present at residues Gln795 to Glu799. Position 803 is a phosphoserine; by CSNK1A1 (Ser803). Residues Cys834, Cys835, and Cys841 are each lipidated (S-palmitoyl cysteine). Tyr858 is modified (phosphotyrosine). Lys875 participates in a covalent cross-link: Glycyl lysine isopeptide (Lys-Gly) (interchain with G-Cter in ubiquitin). LRR repeat units lie at residues Asn882–Ser903, Asn910–Cys930, Lys939–Thr960, and Ser967–Glu988. Cys955 carries the S-palmitoyl cysteine lipid modification. Lys970 is covalently cross-linked (Glycyl lysine isopeptide (Lys-Gly) (interchain with G-Cter in ubiquitin)). The KFERQ-like motif 4 motif lies at Glu988 to Gln992. Ser1032 carries the post-translational modification Phosphoserine.

The protein belongs to the NLRP family. Sensor component of NLRP3 inflammasomes; inflammasomes are supramolecular complexes that assemble in the cytosol in response to pathogens and other damage-associated signals and play critical roles in innate immunity and inflammation. The core of NLRP3 inflammasomes consists of a signal sensor component (NLRP3), an adapter (PYCARD/ASC), which recruits an effector pro-inflammatory caspase (CASP1 and, possibly, CASP4 and CASP5). Homodecamer; inactive NLRP3 forms homodecameric double-ring cages that hide pyrin domains within NACHT-LRR rings to avoid premature activation. Interacts (via pyrin domain) with PYCARD/ASC (via pyrin domain); interaction is direct. Interacts (via LRR repeat domain) with NEK7 (via N-terminus); the interaction is required for the formation of the complex NLRP3:PYCARD, oligomerization of PYCARD/ASC and activation of CASP1. Interacts (via LRR repeat domain) with NR4A1/Nur77 (via N-terminus); the interaction is direct, requires activation of NR4A1 by its ligands NBRE-containing dsDNA and lipopolysaccharide, and stimulates the association of NLRP3 with NEK7 for non-canonical NLRP3 inflammasome activation. Interacts with CARD8; leading to inhibit formation of the NLRP3 inflammasome. Interacts with MEFV; this interaction targets NLRP3 to degradation by autophagy, hence preventing excessive IL1B- and IL18-mediated inflammation. Interacts with EIF2AK2/PKR; this interaction requires EIF2AK2 activity, is accompanied by EIF2AK2 autophosphorylation and promotes inflammasome assembly in response to specific stimuli. Interacts with GBP5 (via DAPIN domain); this interaction promotes inflammasome assembly in response to microbial and soluble, but not crystalline, agents. Interacts with PML (isoform PML-1) (via the leucine-rich repeat (LRR) domain); PML-mediated increase in NLRP3 inflammasome activation does not depend upon this interaction. Interacts (via NACHT domain) with DHX33 (via DEAH box); NLRP3 activation in presence of cytosolic dsRNA is mediated by DHX33. Interacts (via NACHT and LRR domains) with ARRB2; this interaction is direct and inducible by polyunsaturated fatty acids (PUFAs). Interacts (via NACHT domain) with DDX3X under both LPS-primed and inflammasome-activating conditions. Interacts with IRF4 (via the LRR domain); this interaction is direct and is required for optimal IRF4 binding to IL4 promoter and efficient IL4 transactivation during differentiation of Th2 helper T-cells. Interacts with MAVS; promoting localization to mitochondria and activation of the NLRP3 inflammasome. Interacts with MARK4; promoting localization of NLRP3 to the microtubule organizing center (MTOC). Interacts with TRIM50; this interaction also promotes NLRP3 oligomerization and subsequent inflammasome activation. Interacts with IRGM; preventing NLRP3 inflammasome assembly and promoting NLRP3 degradation. Interacts (via KFERQ-like motifs) with HSPA8/HSC70; promoting NLRP3 degradation by the chaperone-mediated autophagy pathway. Interacts (via NACHT and LLR domains) with ABHD8; this interaction is enhanced in the presence of NLRP3 inflammasome inducers, such as ATP, nigericin, silica, or alum. Interaction with ABHD8 leads the recruitment of ZDHHC12, hence facilitating NLRP3 palmitoylation and degradation by the chaperone-mediated autophagy pathway (CMA), therefore attenuating NLRP3 inflammasome activation. In terms of processing, phosphorylation at Ser-194 by MAPK8/JNK1 increases inflammasome activation by promoting deubiquitination by BRCC3 and NLRP3 homooligomerization. Phosphorylation at Ser-803 by CSNK1A1 prevents inflammasome activation by preventing NEK7 recruitment. Phosphorylation at Ser-3 in the pyrin domain inhibits homomultimerization of NLRP3 and activation of the NLRP3 inflammasome: dephosphorylation by protein phosphatase 2A (PP2A) promotes assembly of the NLRP3 inflammasome. Phosphorylation at Ser-291 by PKD/PRKD1 promotes NLRP3 inflammasome assembly. Phosphorylation by ERK1/MAPK3 promotes NLRP3 inflammasome assembly. Phosphorylation by BTK (at Tyr-132, Tyr-136, Tyr-145 and Tyr-164) in the region that mediates binding to phosphatidylinositol phosphate, promotes relocalization of NLRP3 and assembly of the NLRP3 inflammasome. Phosphorylation at Tyr-858 inhibits NLRP3 inflammasome assembly: dephosphorylation by PTPN22 promotes inflammasome activation Phosphorylated by LATS1 and LATS2 at Ser-261 following palmitoylation by ZDHHC1, promoting its relocalization to the microtubule organizing center (MTOC), where NLRP3 is activated by NEK7, leading to inflammasome assembly and activation. Post-translationally, ubiquitinated; undergoes both 'Lys-48'- and 'Lys-63'-linked polyubiquitination. Ubiquitination does not lead to degradation, but inhibits inflammasome activation. Deubiquitination is catalyzed by BRCC3 and associated with NLRP3 activation and inflammasome assembly. This process can be induced by the activation of Toll-like receptors (by LPS), through a non-transcriptional pathway dependent on the mitochondrial production of reactive oxygen species, and by ATP. Ubiquitinated by TRIM31 via 'Lys-48'-linked ubiquitination, leading to its degradation by the proteasome. Ubiquitinated at Lys-687 by the SCF(FBXL2) complex, leading to its degradation by the proteasome. Ubiquitinated by TRIM35 via 'lys-48' and 'Lys-63'-linked ubiquitination leading to inhibition of NLRP3 inflammasome activation. Undergoes 'Lys-27'-linked polyubiquitination by MARCHF5, leading to NLRP3-NEK7 complex formation and NLRP3 oligomerization. The disulfide bond in the pyrin domain might play a role in reactive oxygen species-mediated activation. In terms of processing, palmitoylation by ZDHHC12 promotes NLRP3 degradation by the chaperone-mediated autophagy pathway (CMA) and therefore limits NLRP3 inflammasome activation. Interaction with ZDHHC12, and hence NLRP3 palmitoylation, is enhanced by ABHD8. Following palmitoylation, HSPA8/HSC70 recognizes and binds the KFERQ-like motifs on NLRP3 and promotes NLRP3 recruitment to lysosomes, where it is degraded via the chaperone-mediated autophagy pathway in a LAMP2-dependent process. Palmitoylation at Cys-834 and Cys-835 by ZDHHC5 enhances its binding to NEK7 leading to inflammasome assembly and activation. Palmitoylation at Cys-126 and Cys-955 by ZDHHC1 facilitates phosphorylation at Ser-261 by LATS1 and LATS2, promoting its relocalization to the microtubule organizing center (MTOC), where NLRP3 is activated by NEK7, leading to inflammasome assembly and activation. Depalmitoylated by ABHD17A. Post-translationally, degraded via selective autophagy following interaction with Irgm1. Irgm1 promotes NLRP3 recruitment to autophagosome membranes, promoting its SQSTM1/p62-dependent autophagy-dependent degradation. Expressed with high levels in peripheral blood leukocytes, including Th2 lymphocytes and macrophages. Expressed at low levels in resting osteoblasts (at protein level).

It localises to the cytoplasm. The protein localises to the cytosol. Its subcellular location is the inflammasome. It is found in the cytoskeleton. The protein resides in the microtubule organizing center. It localises to the golgi apparatus membrane. The protein localises to the endoplasmic reticulum. Its subcellular location is the mitochondrion. It is found in the secreted. The protein resides in the nucleus. The catalysed reaction is ATP + H2O = ADP + phosphate + H(+). Its activity is regulated as follows. Under resting conditions, NLRP3 binds ADP and is autoinhibited. Inactive NLRP3 forms homodecameric double-ring cages that hide pyrin domains within NACHT-LRR rings to avoid premature activation. NLRP3 activation stimuli include extracellular ATP, nigericin, reactive oxygen species, crystals of monosodium urate or cholesterol, amyloid-beta fibers, environmental or industrial particles and nanoparticles, such as asbestos, silica, aluminum salts, cytosolic dsRNA, etc. Almost all stimuli trigger intracellular K(+) efflux. These stimuli lead to membrane perturbations that induce activation of NLRP3. Upon activation, NLRP3 is transported to microtubule organizing center (MTOC), where it is unlocked by NEK7, leading to its relocalization to dispersed trans-Golgi network (dTGN) vesicle membranes and recruitment of PYCARD/ASC for the formation of an active inflammasome complex. NEK7-activated NLRP3 forms a disk-shaped inflammasome. NLRP3 and PYCARD/ASC interact via their respective pyrin domains; interaction initiates speck formation (nucleation) which greatly enhances further addition of soluble PYCARD/ASC molecules to the speck in a prion-like polymerization process. Clustered PYCARD/ASC nucleates the formation of CASP1 filaments through the interaction of their respective CARD domains, acting as a platform for CASP1 polymerization and activation. Active CASP1 then processes IL1B and IL18 precursors, leading to the release of mature cytokines in the extracellular milieu and inflammatory response. NLRP3 inflammasome assembly is inhibited by IRGM, which impedes NLRP3 oligomerization. NLRP3 inflammasome is inhibited by cyclic AMP (cAMP), which directly binds NLRP3; inhibition is relieved by calcium-sensing receptor CASR, which inhibits production of cAMP. Specifically inhibited by sulfonylurea MCC950 (also named CP-456,773, CRID3), a potent and specific small-molecule inhibitor of the NLRP3 inflammasome that acts by preventing ATP hydrolysis. In terms of biological role, sensor component of the NLRP3 inflammasome, which mediates inflammasome activation in response to defects in membrane integrity, leading to secretion of inflammatory cytokines IL1B and IL18 and pyroptosis. In response to pathogens and other damage-associated signals that affect the integrity of membranes, initiates the formation of the inflammasome polymeric complex composed of NLRP3, CASP1 and PYCARD/ASC. Recruitment of pro-caspase-1 (proCASP1) to the NLRP3 inflammasome promotes caspase-1 (CASP1) activation, which subsequently cleaves and activates inflammatory cytokines IL1B and IL18 and gasdermin-D (GSDMD), promoting cytokine secretion and pyroptosis. Activation of NLRP3 inflammasome is also required for HMGB1 secretion; stimulating inflammatory responses. Under resting conditions, ADP-bound NLRP3 is autoinhibited. NLRP3 activation stimuli include extracellular ATP, nigericin, reactive oxygen species, crystals of monosodium urate or cholesterol, amyloid-beta fibers, environmental or industrial particles and nanoparticles, such as asbestos, silica, aluminum salts, cytosolic dsRNA, etc. Almost all stimuli trigger intracellular K(+) efflux. These stimuli lead to membrane perturbation and activation of NLRP3. Upon activation, NLRP3 is transported to microtubule organizing center (MTOC), where it is unlocked by NEK7, leading to its relocalization to dispersed trans-Golgi network (dTGN) vesicle membranes and formation of an active inflammasome complex. Associates with dTGN vesicle membranes by binding to phosphatidylinositol 4-phosphate (PtdIns4P). Shows ATPase activity. Its function is as follows. Independently of inflammasome activation, regulates the differentiation of T helper 2 (Th2) cells and has a role in Th2 cell-dependent asthma and tumor growth. During Th2 differentiation, required for optimal IRF4 binding to IL4 promoter and for IRF4-dependent IL4 transcription. Binds to the consensus DNA sequence 5'-GRRGGNRGAG-3'. May also participate in the transcription of IL5, IL13, GATA3, CCR3, CCR4 and MAF. This is NACHT, LRR and PYD domains-containing protein 3 from Mus musculus (Mouse).